The sequence spans 279 residues: 4-hydroxy-3-methylbut-2-enyl diphosphate reductase (279 aa).

C12 lines the [4Fe-4S] cluster pocket. (2E)-4-hydroxy-3-methylbut-2-enyl diphosphate-binding residues include H40 and H72. The dimethylallyl diphosphate site is built by H40 and H72. Residues H40 and H72 each coordinate isopentenyl diphosphate. Residue C94 coordinates [4Fe-4S] cluster. Residue H122 coordinates (2E)-4-hydroxy-3-methylbut-2-enyl diphosphate. H122 provides a ligand contact to dimethylallyl diphosphate. An isopentenyl diphosphate-binding site is contributed by H122. The Proton donor role is filled by E124. T161 contacts (2E)-4-hydroxy-3-methylbut-2-enyl diphosphate. A [4Fe-4S] cluster-binding site is contributed by C189. Residues S217, N219, and S261 each coordinate (2E)-4-hydroxy-3-methylbut-2-enyl diphosphate. Positions 217, 219, and 261 each coordinate dimethylallyl diphosphate. S217, N219, and S261 together coordinate isopentenyl diphosphate.

This sequence belongs to the IspH family. It depends on [4Fe-4S] cluster as a cofactor.

It carries out the reaction isopentenyl diphosphate + 2 oxidized [2Fe-2S]-[ferredoxin] + H2O = (2E)-4-hydroxy-3-methylbut-2-enyl diphosphate + 2 reduced [2Fe-2S]-[ferredoxin] + 2 H(+). The catalysed reaction is dimethylallyl diphosphate + 2 oxidized [2Fe-2S]-[ferredoxin] + H2O = (2E)-4-hydroxy-3-methylbut-2-enyl diphosphate + 2 reduced [2Fe-2S]-[ferredoxin] + 2 H(+). The protein operates within isoprenoid biosynthesis; dimethylallyl diphosphate biosynthesis; dimethylallyl diphosphate from (2E)-4-hydroxy-3-methylbutenyl diphosphate: step 1/1. It functions in the pathway isoprenoid biosynthesis; isopentenyl diphosphate biosynthesis via DXP pathway; isopentenyl diphosphate from 1-deoxy-D-xylulose 5-phosphate: step 6/6. Its function is as follows. Catalyzes the conversion of 1-hydroxy-2-methyl-2-(E)-butenyl 4-diphosphate (HMBPP) into a mixture of isopentenyl diphosphate (IPP) and dimethylallyl diphosphate (DMAPP). Acts in the terminal step of the DOXP/MEP pathway for isoprenoid precursor biosynthesis. The protein is 4-hydroxy-3-methylbut-2-enyl diphosphate reductase of Syntrophotalea carbinolica (strain DSM 2380 / NBRC 103641 / GraBd1) (Pelobacter carbinolicus).